Here is a 522-residue protein sequence, read N- to C-terminus: GMP synthase [glutamine-hydrolyzing] (522 aa).

The 196-residue stretch at 9-204 folds into the Glutamine amidotransferase type-1 domain; it reads KILILDFGAQ…VVDICGCQTL (196 aa). Residue Cys-86 is the Nucleophile of the active site. Catalysis depends on residues His-178 and Glu-180. Residues 205-397 form the GMPS ATP-PPase domain; sequence WTSANIIEDQ…LGLPHAMVYR (193 aa). 232 to 238 contacts ATP; the sequence is SGGVDSS.

As to quaternary structure, homodimer.

The catalysed reaction is XMP + L-glutamine + ATP + H2O = GMP + L-glutamate + AMP + diphosphate + 2 H(+). It functions in the pathway purine metabolism; GMP biosynthesis; GMP from XMP (L-Gln route): step 1/1. Its function is as follows. Catalyzes the synthesis of GMP from XMP. This chain is GMP synthase [glutamine-hydrolyzing], found in Xylella fastidiosa (strain M23).